The primary structure comprises 82 residues: Small ribosomal subunit protein bS20 (82 aa).

This sequence belongs to the bacterial ribosomal protein bS20 family.

In terms of biological role, binds directly to 16S ribosomal RNA. The polypeptide is Small ribosomal subunit protein bS20 (Streptococcus suis (strain 98HAH33)).